A 292-amino-acid polypeptide reads, in one-letter code: tRNA (guanine-N(1)-)-methyltransferase (292 aa).

S-adenosyl-L-methionine-binding positions include Gly151 and 175-180 (IGDYVL).

It belongs to the RNA methyltransferase TrmD family. Homodimer.

It localises to the cytoplasm. The enzyme catalyses guanosine(37) in tRNA + S-adenosyl-L-methionine = N(1)-methylguanosine(37) in tRNA + S-adenosyl-L-homocysteine + H(+). Its function is as follows. Specifically methylates guanosine-37 in various tRNAs. This is tRNA (guanine-N(1)-)-methyltransferase from Corynebacterium diphtheriae (strain ATCC 700971 / NCTC 13129 / Biotype gravis).